The primary structure comprises 185 residues: Elongation factor P (185 aa).

Belongs to the elongation factor P family.

The protein localises to the cytoplasm. Its pathway is protein biosynthesis; polypeptide chain elongation. Involved in peptide bond synthesis. Stimulates efficient translation and peptide-bond synthesis on native or reconstituted 70S ribosomes in vitro. Probably functions indirectly by altering the affinity of the ribosome for aminoacyl-tRNA, thus increasing their reactivity as acceptors for peptidyl transferase. The polypeptide is Elongation factor P (Thermotoga petrophila (strain ATCC BAA-488 / DSM 13995 / JCM 10881 / RKU-1)).